A 144-amino-acid chain; its full sequence is Large ribosomal subunit protein uL16 (144 aa).

It belongs to the universal ribosomal protein uL16 family. As to quaternary structure, part of the 50S ribosomal subunit.

Its function is as follows. Binds 23S rRNA and is also seen to make contacts with the A and possibly P site tRNAs. The chain is Large ribosomal subunit protein uL16 from Clostridium botulinum (strain Alaska E43 / Type E3).